A 141-amino-acid polypeptide reads, in one-letter code: Plasmatocyte-spreading peptide (141 aa).

The N-terminal stretch at 1-22 is a signal peptide; that stretch reads MKLTINILFCLILISQYNSANG. A propeptide spanning residues 23 to 118 is cleaved from the precursor; sequence NLRDLFNNVR…ATGGKDDKGR (96 aa). Basic and acidic residues predominate over residues 46–58; sequence VKTLFHPSDKSGN. The interval 46–118 is disordered; it reads VKTLFHPSDK…ATGGKDDKGR (73 aa). Positions 83-98 are enriched in low complexity; sequence PVAVTPAPVVSTTTQA. Residues 99–108 are compositionally biased toward polar residues; the sequence is SAPTVATNGT. Cys-125 and Cys-137 are disulfide-bonded.

The protein belongs to the GBP/PSP1/paralytic peptide family.

In terms of biological role, mediates the spreading of plasmatocytes to foreign surfaces. Plasmocytes are a class of hemocytes involved in insect cellular immunity. This Chrysodeixis includens (Soybean looper) protein is Plasmatocyte-spreading peptide (PSP1).